A 377-amino-acid polypeptide reads, in one-letter code: P2Y purinoceptor 2 (377 aa).

Topologically, residues 1 to 32 are extracellular; it reads MAADLGPWNDTINGTWDGDELGYRCRFNEDFK. N-linked (GlcNAc...) asparagine glycosylation is found at asparagine 9 and asparagine 13. Residues 33-59 form a helical membrane-spanning segment; sequence YVLLPVSYGVVCVPGLCLNAVALYIFL. Residues 60–70 are Cytoplasmic-facing; sequence CRLKTWNASTT. A helical transmembrane segment spans residues 71–93; the sequence is YMFHLAVSDALYAASLPLLVYYY. Residues 94–110 lie on the Extracellular side of the membrane; the sequence is ARGDHWPFSTVLCKLVR. An intrachain disulfide couples cysteine 106 to cysteine 183. The helical transmembrane segment at 111–129 threads the bilayer; that stretch reads FLFYTNLYCSILFLTCISV. The Cytoplasmic portion of the chain corresponds to 130–152; the sequence is HRCLGVLRPLRSLRWGRARYARR. Residues 153–172 form a helical membrane-spanning segment; it reads VAGAVWVLVLACQAPVLYFV. The Extracellular portion of the chain corresponds to 173-194; the sequence is TTSARGGRVTCHDTSAPELFSR. Residues 195-220 traverse the membrane as a helical segment; the sequence is FVAYSSVMLGLLFAVPFAVILVCYVL. The Cytoplasmic segment spans residues 221–246; that stretch reads MARRLLKPAYGTSGGLPRAKRKSVRT. The chain crosses the membrane as a helical span at residues 247 to 269; it reads IAVVLAVFALCFLPFHVTRTLYY. The Extracellular portion of the chain corresponds to 270 to 287; it reads SFRSLDLSCHTLNAINMA. Residues 288-309 traverse the membrane as a helical segment; it reads YKVTRPLASANSCLDPVLYFLA. Over 310-377 the chain is Cytoplasmic; it reads GQRLVRFARD…GSENTKDIRL (68 aa). The interval 318–377 is disordered; that stretch reads RDAKPPTGPSPATPARRRLGLRRSDRTDMQRIEDVLGSSEDSRRTESTPAGSENTKDIRL. The segment covering 339 to 363 has biased composition (basic and acidic residues); it reads RRSDRTDMQRIEDVLGSSEDSRRTE.

This sequence belongs to the G-protein coupled receptor 1 family. In terms of tissue distribution, spleen, testis, kidney, liver, lung, heart and brain.

It localises to the cell membrane. Functionally, receptor for ATP and UTP coupled to G-proteins that activate a phosphatidylinositol-calcium second messenger system. The affinity range is UTP = ATP &gt; ATP-gamma-S &gt;&gt; 2-methylthio-ATP = ADP. In Homo sapiens (Human), this protein is P2Y purinoceptor 2 (P2RY2).